A 505-amino-acid chain; its full sequence is OVARIAN TUMOR DOMAIN-containing deubiquitinating enzyme 6 (505 aa).

The interval 1 to 191 is disordered; the sequence is MTRILVQRGS…NSSDEHMPCY (191 aa). Positions 9–30 are enriched in low complexity; sequence GSSGSSSNSSRPSSSSSSSSGS. The segment covering 51–72 has biased composition (basic and acidic residues); sequence DEKQEEVTVVEKAECSDAKDVA. Residues 73–86 show a composition bias toward acidic residues; sequence VDSDEPADREDDEG. Positions 115–124 are enriched in pro residues; it reads PPVPAPPPKP. The segment covering 159–173 has biased composition (low complexity); it reads SSRSSPTGSHPSSPR. Residues 174 to 188 are compositionally biased toward basic and acidic residues; the sequence is SHSENEGYNSSDEHM. The OTU domain maps to 216 to 339; the sequence is FEIRRMLEDG…GNHYNSLVDP (124 aa). The active site involves D224. C227 serves as the catalytic Nucleophile. The active site involves H332. The disordered stretch occupies residues 416–447; that stretch reads RIGPKESSTSNAETSSSGARPSGSDSKPAEAV. Over residues 421–441 the composition is skewed to low complexity; the sequence is ESSTSNAETSSSGARPSGSDS. Residues 446–491 form the UBA domain; that stretch reads AVKEKTVLSSSIEMVLSMGFSYAQAMEAYSIFGDDVDSMVCYVLET.

It belongs to the peptidase C85 family. Interacts with KDM1C. As to expression, mostly expressed in stems flowers and siliques, and, to a lower extent, in leaves, roots and seedlings.

The protein localises to the nucleus. The protein resides in the cytoplasm. The enzyme catalyses Thiol-dependent hydrolysis of ester, thioester, amide, peptide and isopeptide bonds formed by the C-terminal Gly of ubiquitin (a 76-residue protein attached to proteins as an intracellular targeting signal).. Its function is as follows. Hydrolase that can remove conjugated ubiquitin from proteins in vitro and may therefore play an important regulatory role at the level of protein turnover by preventing degradation. Binds chromatin (e.g. nucleosomes and histones) and has enzymatic histone deubiquitinase activity, specific for the H2B histone. Can both repress (e.g. OSR2) and promote (e.g. AN3) the expression of target genes by associating with chromatin, deubiquitinating H2B and regulating its euchromatic histone marks (e.g. H3ac and H3K4me). In association with LDL1/KDM1C, involved in transcriptional gene repression via histone deubiquitination and demethylation. Promotes the concerted epigenetic regulation and repression (e.g. the removal of euchromatic histone acetylation, ubiquitination, and methylation marks) of a set of genes (e.g. GA20OX, WUS, OSR2, ARL and ABI5) that collectively limit plant growth thus stimulating plant growth and increasing cell size. The protein is OVARIAN TUMOR DOMAIN-containing deubiquitinating enzyme 6 of Arabidopsis thaliana (Mouse-ear cress).